The chain runs to 105 residues: Cuticle protein AMP1B (105 aa).

Residues 1-21 (DRDAQTLTDERSDQGDGNFRY) are disordered. A Chitin-binding type R&amp;R domain is found at 16–81 (DGNFRYEFET…PSSDLLPVPP (66 aa)).

Arthrodial membrane.

This chain is Cuticle protein AMP1B, found in Homarus americanus (American lobster).